A 296-amino-acid chain; its full sequence is Ribonuclease HIII (296 aa).

The 217-residue stretch at 80–296 folds into the RNase H type-2 domain; that stretch reads LALIGSDEVG…NTKKAYQRLK (217 aa). Residues Asp86, Glu87, and Asp191 each coordinate a divalent metal cation.

The protein belongs to the RNase HII family. RnhC subfamily. It depends on Mn(2+) as a cofactor. Mg(2+) is required as a cofactor.

It is found in the cytoplasm. It catalyses the reaction Endonucleolytic cleavage to 5'-phosphomonoester.. Functionally, endonuclease that specifically degrades the RNA of RNA-DNA hybrids. The polypeptide is Ribonuclease HIII (Streptococcus thermophilus (strain ATCC BAA-491 / LMD-9)).